Reading from the N-terminus, the 136-residue chain is Large ribosomal subunit protein uL16 (136 aa).

Residues 1-17 (MLQPKRTKFRKRHKGRN) are compositionally biased toward basic residues. The tract at residues 1–21 (MLQPKRTKFRKRHKGRNRGLA) is disordered.

The protein belongs to the universal ribosomal protein uL16 family. In terms of assembly, part of the 50S ribosomal subunit.

Binds 23S rRNA and is also seen to make contacts with the A and possibly P site tRNAs. The protein is Large ribosomal subunit protein uL16 of Buchnera aphidicola subsp. Acyrthosiphon kondoi (Acyrthosiphon kondoi symbiotic bacterium).